The sequence spans 310 residues: Cell division protein FtsQ (310 aa).

Positions Met1–Ala57 are disordered. The Cytoplasmic portion of the chain corresponds to Met1–Gln95. A helical membrane pass occupies residues Thr96–Phe116. Topologically, residues Thr117–Lys310 are extracellular. The POTRA domain occupies Met120–Arg188.

This sequence belongs to the FtsQ/DivIB family. FtsQ subfamily.

The protein localises to the cell membrane. Functionally, essential cell division protein. This is Cell division protein FtsQ from Mycobacteroides abscessus (strain ATCC 19977 / DSM 44196 / CCUG 20993 / CIP 104536 / JCM 13569 / NCTC 13031 / TMC 1543 / L948) (Mycobacterium abscessus).